We begin with the raw amino-acid sequence, 377 residues long: Cobalt-precorrin-5B C(1)-methyltransferase (377 aa).

Belongs to the CbiD family.

It carries out the reaction Co-precorrin-5B + S-adenosyl-L-methionine = Co-precorrin-6A + S-adenosyl-L-homocysteine. Its pathway is cofactor biosynthesis; adenosylcobalamin biosynthesis; cob(II)yrinate a,c-diamide from sirohydrochlorin (anaerobic route): step 6/10. In terms of biological role, catalyzes the methylation of C-1 in cobalt-precorrin-5B to form cobalt-precorrin-6A. This Alkaliphilus metalliredigens (strain QYMF) protein is Cobalt-precorrin-5B C(1)-methyltransferase.